Here is a 78-residue protein sequence, read N- to C-terminus: Large ribosomal subunit protein eL20 (78 aa).

This sequence belongs to the eukaryotic ribosomal protein eL20 family. Part of the 50S ribosomal subunit. Binds 23S rRNA.

This chain is Large ribosomal subunit protein eL20, found in Pyrobaculum arsenaticum (strain DSM 13514 / JCM 11321 / PZ6).